The sequence spans 113 residues: T cell receptor alpha variable 8-1 (113 aa).

Residues 1-20 (MLLLLIPVLGMIFALRDARA) form the signal peptide. The Ig-like domain maps to 21–113 (QSVSQHNHHV…DTAEYFCAVN (93 aa)). An intrachain disulfide couples C42 to C110. N43 carries an N-linked (GlcNAc...) asparagine glycan.

As to quaternary structure, alpha-beta TR is a heterodimer composed of an alpha and beta chain; disulfide-linked. The alpha-beta TR is associated with the transmembrane signaling CD3 coreceptor proteins to form the TR-CD3 (TcR or TCR). The assembly of alpha-beta TR heterodimers with CD3 occurs in the endoplasmic reticulum where a single alpha-beta TR heterodimer associates with one CD3D-CD3E heterodimer, one CD3G-CD3E heterodimer and one CD247 homodimer forming a stable octameric structure. CD3D-CD3E and CD3G-CD3E heterodimers preferentially associate with TR alpha and TR beta chains, respectively. The association of the CD247 homodimer is the last step of TcR assembly in the endoplasmic reticulum and is required for transport to the cell surface.

It is found in the cell membrane. V region of the variable domain of T cell receptor (TR) alpha chain that participates in the antigen recognition. Alpha-beta T cell receptors are antigen specific receptors which are essential to the immune response and are present on the cell surface of T lymphocytes. Recognize peptide-major histocompatibility (MH) (pMH) complexes that are displayed by antigen presenting cells (APC), a prerequisite for efficient T cell adaptive immunity against pathogens. Binding of alpha-beta TR to pMH complex initiates TR-CD3 clustering on the cell surface and intracellular activation of LCK that phosphorylates the ITAM motifs of CD3G, CD3D, CD3E and CD247 enabling the recruitment of ZAP70. In turn ZAP70 phosphorylates LAT, which recruits numerous signaling molecules to form the LAT signalosome. The LAT signalosome propagates signal branching to three major signaling pathways, the calcium, the mitogen-activated protein kinase (MAPK) kinase and the nuclear factor NF-kappa-B (NF-kB) pathways, leading to the mobilization of transcription factors that are critical for gene expression and essential for T cell growth and differentiation. The T cell repertoire is generated in the thymus, by V-(D)-J rearrangement. This repertoire is then shaped by intrathymic selection events to generate a peripheral T cell pool of self-MH restricted, non-autoaggressive T cells. Post-thymic interaction of alpha-beta TR with the pMH complexes shapes TR structural and functional avidity. This is T cell receptor alpha variable 8-1 from Homo sapiens (Human).